The sequence spans 1475 residues: MASGAGGVGGGGGGKIRTRRCHQGPIKPYQQGRQQHQGILSRVTESVKNIVPGWLQRYFNKNEDVCSCSTDTSEVPRWPENKEDHLVYADEESSNITDGRITPEPAVSNTEEPSTTSTASNYPDVLTRPSLHRSHLNFSMLESPALHCQPSTSSAFPIGSSGFSLVKEIKDSTSQHDDDNISTTSGFSSRASDKDITVSKNTSLPPLWSPEAERSHSLSQHTATSSKKPAFNLSAFGTLSPSLGNSSILKTSQLGDSPFYPGKTTYGGAAAAVRQSKLRNTPYQAPVRRQMKAKQLSAQSYGVTSSTARRILQSLEKMSSPLADAKRIPSIVSSPLNSPLDRSGIDITDFQAKREKVDSQYPPVQRLMTPKPVSIATNRSVYFKPSLTPSGEFRKTNQRIDNKCSTGYEKNMTPGQNREQRESGFSYPNFSLPAANGLSSGVGGGGGKMRRERTRFVASKPLEEEEMEVPVLPKISLPITSSSLPTFNFSSPEITTSSPSPINSSQALTNKVQMTSPSSTGSPMFKFSSPIVKSTEANVLPPSSIGFTFSVPVAKTAELSGSSSTLEPIISSSAHHVTTVNSTNCKKTPPEDCEGPFRPAEILKEGSVLDILKSPGFASPKIDSVAAQPTATSPVVYTRPAISSFSSSGIGFGESLKAGSSWQCDTCLLQNKVTDNKCIACQAAKLSPRDTAKQTGIETPNKSGKTTLSASGTGFGDKFKPVIGTWDCDTCLVQNKPEAIKCVACETPKPGTCVKRALTLTVVSESAETMTASSSSCTVTTGTLGFGDKFKRPIGSWECSVCCVSNNAEDNKCVSCMSEKPGSSVPASSSSTVPVSLPSGGSLGLEKFKKPEGSWDCELCLVQNKADSTKCLACESAKPGTKSGFKGFDTSSSSSNSAASSSFKFGVSSSSSGPSQTLTSTGNFKFGDQGGFKIGVSSDSGSINPMSEGFKFSKPIGDFKFGVSSESKPEEVKKDSKNDNFKFGLSSGLSNPVSLTPFQFGVSNLGQEEKKEELPKSSSAGFSFGTGVINSTPAPANTIVTSENKSSFNLGTIETKSASVAPFTCKTSEAKKEEMPATKGGFSFGNVEPASLPSASVFVLGRTEEKQQEPVTSTSLVFGKKADNEEPKCQPVFSFGNSEQTKDENSSKSTFSFSMTKPSEKESEQPAKATFAFGAQTSTTADQGAAKPVFSFLNNSSSSSSTPATSAGGGIFGSSTSSSNPPVATFVFGQSSNPVSSSAFGNTAESSTSQSLLFSQDSKLATTSSTGTAVTPFVFGPGASSNNTTTSGFGFGATTTSSSAGSSFVFGTGPSAPSASPAFGANQTPTFGQSQGASQPNPPGFGSISSSTALFPTGSQPAPPTFGTVSSSSQPPVFGQQPSQSAFGSGTTPNSSSAFQFGSSTTNFNFTNNSPSGVFTFGANSSTPAASAQPSGSGGFPFNQSPAAFTVGSNGKNVFSSSGTSFSGRKIKTAVRRRK.

The span at 1-15 shows a compositional bias: gly residues; the sequence is MASGAGGVGGGGGGK. Disordered regions lie at residues 1 to 37, 90 to 124, and 171 to 225; these read MASG…QQHQ, DEES…NYPD, and DSTS…TATS. The residue at position 2 (Ala2) is an N-acetylalanine. Thr102 is subject to Phosphothreonine. Polar residues-rich tracts occupy residues 107–121 and 181–190; these read VSNT…TASN and ISTTSGFSSR. Ser182, Ser185, Ser192, Ser203, and Ser209 each carry phosphoserine. Repeat unit 1 spans residues 236–237; it reads FG. Residues 236 to 1418 form a 29 X 2 AA repeats of F-G region; that stretch reads FGTLSPSLGN…NSPSGVFTFG (1183 aa). Phosphoserine occurs at positions 240, 257, 297, 320, 330, 333, 334, 338, and 343. Lys353 is covalently cross-linked (Glycyl lysine isopeptide (Lys-Gly) (interchain with G-Cter in SUMO2)). Thr369 carries the post-translational modification Phosphothreonine. Lys384 is subject to N6-acetyllysine. Thr388 carries the post-translational modification Phosphothreonine. Residues Ser500, Ser516, Ser518, Ser522, and Ser529 each carry the phosphoserine modification. Residues Ser534 and Ser544 are each glycosylated (O-linked (GlcNAc) serine). Phosphothreonine is present on Thr588. Phosphoserine occurs at positions 607, 614, 619, and 633. Copy 2 of the repeat occupies 652 to 653; the sequence is FG. The RanBP2-type 1 zinc finger occupies 657–687; it reads KAGSSWQCDTCLLQNKVTDNKCIACQAAKLS. Positions 664, 667, 678, and 681 each coordinate Zn(2+). Residue Ser687 is modified to Phosphoserine. Residues 715-716 form repeat 3; it reads FG. Position 718 is an N6-acetyllysine (Lys718). The RanBP2-type 2 zinc-finger motif lies at 722-751; sequence VIGTWDCDTCLVQNKPEAIKCVACETPKPG. Positions 728, 731, 742, and 745 each coordinate Zn(2+). Repeat 4 spans residues 786-787; it reads FG. 2 consecutive RanBP2-type zinc fingers follow at residues 793 to 822 and 851 to 880; these read PIGS…EKPG and PEGS…AKPG. Positions 799, 802, 813, 816, 857, 860, 871, and 874 each coordinate Zn(2+). At Ser891 the chain carries Phosphoserine. Copy 5 of the repeat occupies 905 to 906; it reads FG. Ser908 and Ser909 each carry an O-linked (GlcNAc) serine glycan. Repeat unit 6 spans residues 926 to 927; that stretch reads FG. The residue at position 954 (Lys954) is an N6-acetyllysine. A run of 5 repeats spans residues 961–962, 983–984, 1000–1001, 1024–1025, and 1084–1085. An O-linked (GlcNAc) serine glycan is attached at Ser1113. 2 tandem repeats follow at residues 1118-1119 and 1135-1136. Residues 1128-1167 are disordered; sequence KCQPVFSFGNSEQTKDENSSKSTFSFSMTKPSEKESEQPA. Low complexity predominate over residues 1147-1157; the sequence is SKSTFSFSMTK. Thr1156 is a glycosylation site (O-linked (GlcNAc) threonine). Repeat copies occupy residues 1173–1174, 1212–1213, 1228–1229, 1240–1241, 1275–1276, 1289–1290, 1291–1292, 1306–1307, 1319–1320, 1327–1328, and 1341–1342. The segment at 1311–1402 is disordered; sequence SAPSASPAFG…SAFQFGSSTT (92 aa). The span at 1321 to 1335 shows a compositional bias: polar residues; the sequence is ANQTPTFGQSQGASQ. 2 stretches are compositionally biased toward polar residues: residues 1343 to 1356 and 1363 to 1396; these read SISS…TGSQ and GTVS…SAFQ. The segment at 1350 to 1475 is (Microbial infection) Interacts with HIV-1 capsid protein p24 (CA); the sequence is LFPTGSQPAP…KIKTAVRRRK (126 aa). 5 repeat units span residues 1362–1363, 1374–1375, 1383–1384, 1397–1398, and 1417–1418. Composition is skewed to polar residues over residues 1420–1431 and 1438–1463; these read NSSTPAASAQPS and FNQS…TSFS. The segment at 1420-1475 is disordered; the sequence is NSSTPAASAQPSGSGGFPFNQSPAAFTVGSNGKNVFSSSGTSFSGRKIKTAVRRRK. Phosphoserine occurs at positions 1457, 1461, and 1463. The span at 1465–1475 shows a compositional bias: basic residues; sequence RKIKTAVRRRK.

It belongs to the NUP153 family. Part of the nuclear pore complex (NPC). Interacts with TPR (via coiled coil region); the interaction is direct and provides a link between the core structure and the TPR-containing nuclear basket of the nuclear pore complex (NPC). Interacts with HIKESHI. Interacts with SENP2. Interacts with XPO5. Interacts with RAN; the interaction occurs in a GTP- and GDP-independent manner. Interacts with MCM3AP isoform GANP; this interaction is required for GANP localization at the nuclear pore complex. Interacts with MAPK1. In terms of assembly, (Microbial infection) Interacts (via C-terminus) with HIV-1 capsid protein p24 (CA) (via N-terminus). As to quaternary structure, (Microbial infection) Interacts with HIV-1 integrase; this interaction might play a role in nuclear import of HIV pre-integration complex. (Microbial infection) Interacts with hepatitis B virus capsid protein; this interaction probably plays a role in nuclear import of HBV genome. In terms of assembly, (Microbial infection) Interacts with Epstein-barr virus BGLF4; this interaction allows BGLF4 nuclear entry. As to quaternary structure, (Microbial infection) Interacts with HIV-2 virus protein vpx; this interaction might promote vpx nuclear entry. Requires Zn(2+) as cofactor. Phosphorylated in interphase, hyperphosphorylated during mitosis. May play a role in the reversible disassembly of the nuclear pore complex during mitosis. Post-translationally, proteolytically degraded after poliovirus (PV) infection; degradation is partial and NCP- and TPR-binding domains withstand degradation. In terms of processing, O-glycosylated during cytokinesis at sites identical or close to phosphorylation sites, this interferes with the phosphorylation status.

Its subcellular location is the nucleus. It localises to the nucleus membrane. The protein resides in the nuclear pore complex. In terms of biological role, component of the nuclear pore complex (NPC), a complex required for the trafficking across the nuclear envelope. Functions as a scaffolding element in the nuclear phase of the NPC essential for normal nucleocytoplasmic transport of proteins and mRNAs. Involved in the quality control and retention of unspliced mRNAs in the nucleus; in association with TPR, regulates the nuclear export of unspliced mRNA species bearing constitutive transport element (CTE) in a NXF1- and KHDRBS1-independent manner. Mediates TPR anchoring to the nuclear membrane at NPC. The repeat-containing domain may be involved in anchoring other components of the NPC to the pore membrane. Possible DNA-binding subunit of the nuclear pore complex (NPC). Its function is as follows. (Microbial infection) Interacts with HIV-1 caspid protein P24 and thereby promotes the integration of the virus in the nucleus of non-dividing cells (in vitro). Functionally, (Microbial infection) Binds HIV-2 protein vpx and thereby promotes the nuclear translocation of the lentiviral genome (in vitro). This Homo sapiens (Human) protein is Nuclear pore complex protein Nup153 (NUP153).